The chain runs to 229 residues: Enolase-phosphatase E1 (229 aa).

Residues 208 to 218 show a composition bias toward polar residues; it reads DTQSTHRQVSS. Residues 208 to 229 are disordered; that stretch reads DTQSTHRQVSSFDDIHPEQIPT. The span at 220-229 shows a compositional bias: basic and acidic residues; that stretch reads DDIHPEQIPT.

It belongs to the HAD-like hydrolase superfamily. MasA/MtnC family. Monomer. It depends on Mg(2+) as a cofactor.

The catalysed reaction is 5-methylsulfanyl-2,3-dioxopentyl phosphate + H2O = 1,2-dihydroxy-5-(methylsulfanyl)pent-1-en-3-one + phosphate. The protein operates within amino-acid biosynthesis; L-methionine biosynthesis via salvage pathway; L-methionine from S-methyl-5-thio-alpha-D-ribose 1-phosphate: step 3/6. It functions in the pathway amino-acid biosynthesis; L-methionine biosynthesis via salvage pathway; L-methionine from S-methyl-5-thio-alpha-D-ribose 1-phosphate: step 4/6. In terms of biological role, bifunctional enzyme that catalyzes the enolization of 2,3-diketo-5-methylthiopentyl-1-phosphate (DK-MTP-1-P) into the intermediate 2-hydroxy-3-keto-5-methylthiopentenyl-1-phosphate (HK-MTPenyl-1-P), which is then dephosphorylated to form the acireductone 1,2-dihydroxy-3-keto-5-methylthiopentene (DHK-MTPene). This Cronobacter sakazakii (strain ATCC BAA-894) (Enterobacter sakazakii) protein is Enolase-phosphatase E1.